Here is a 716-residue protein sequence, read N- to C-terminus: 1,4-alpha-glucan branching enzyme GlgB (716 aa).

Aspartate 398 acts as the Nucleophile in catalysis. Glutamate 451 acts as the Proton donor in catalysis.

It belongs to the glycosyl hydrolase 13 family. GlgB subfamily. As to quaternary structure, monomer.

It carries out the reaction Transfers a segment of a (1-&gt;4)-alpha-D-glucan chain to a primary hydroxy group in a similar glucan chain.. It participates in glycan biosynthesis; glycogen biosynthesis. In terms of biological role, catalyzes the formation of the alpha-1,6-glucosidic linkages in glycogen by scission of a 1,4-alpha-linked oligosaccharide from growing alpha-1,4-glucan chains and the subsequent attachment of the oligosaccharide to the alpha-1,6 position. The polypeptide is 1,4-alpha-glucan branching enzyme GlgB (Nitrobacter winogradskyi (strain ATCC 25391 / DSM 10237 / CIP 104748 / NCIMB 11846 / Nb-255)).